We begin with the raw amino-acid sequence, 266 residues long: Zinc transporter ZupT (266 aa).

8 helical membrane-spanning segments follow: residues leucine 8–valine 28, phenylalanine 35–isoleucine 55, histidine 70–isoleucine 90, glycine 123–phenylalanine 143, glycine 152–valine 172, phenylalanine 185–leucine 205, phenylalanine 209–isoleucine 229, and isoleucine 246–alanine 266. Fe(2+) is bound by residues asparagine 134 and glutamate 137. Zn(2+)-binding residues include glutamate 137 and histidine 162. The Fe(2+) site is built by asparagine 163, glutamate 166, and glutamate 195. Residue glutamate 166 participates in Zn(2+) binding.

This sequence belongs to the ZIP transporter (TC 2.A.5) family. ZupT subfamily.

It localises to the cell inner membrane. The catalysed reaction is Zn(2+)(in) = Zn(2+)(out). In terms of biological role, mediates zinc uptake. May also transport other divalent cations. This Chlorobium limicola (strain DSM 245 / NBRC 103803 / 6330) protein is Zinc transporter ZupT.